Reading from the N-terminus, the 222-residue chain is UPF0128 protein PF1488 (222 aa).

This sequence belongs to the UPF0128 family.

This Pyrococcus furiosus (strain ATCC 43587 / DSM 3638 / JCM 8422 / Vc1) protein is UPF0128 protein PF1488.